The sequence spans 119 residues: E3 ubiquitin-protein ligase PPP1R11 (119 aa).

The tract at residues Met1–Lys42 is disordered. 2 atypical RING finger domain regions span residues Asn55–Cys65 and Cys87–His96. The tract at residues His96–His119 is disordered. Positions Pro107–His119 are enriched in basic and acidic residues.

The enzyme catalyses S-ubiquitinyl-[E2 ubiquitin-conjugating enzyme]-L-cysteine + [acceptor protein]-L-lysine = [E2 ubiquitin-conjugating enzyme]-L-cysteine + N(6)-ubiquitinyl-[acceptor protein]-L-lysine.. It participates in protein modification; protein ubiquitination. Atypical E3 ubiquitin-protein ligase which ubiquitinates TLR2 at 'Lys-754' leading to its degradation by the proteasome. Inhibitor of protein phosphatase 1. This is E3 ubiquitin-protein ligase PPP1R11 (ppp1r11) from Xenopus tropicalis (Western clawed frog).